Consider the following 575-residue polypeptide: MKTKGKVVGVNGNLVTIEVEGSVSMNEVLFIKTAGRNLKAEIIRVRGNEVDAQVFELTKGISVGDVVEFTDKLLTVELGPGLLTQVYDGLQNPLPELAIQCGFFLERGVYLRPLNKDKKWNFKKTAKVGDSVIAGDFLGFVIEGTVHHQIMIPFYKRDSYKIVEIVNDGNYSIDEQIAVIEDDSGMKHSITMSFHWPVKIPITNYKERLIPSEPMLTQTRIIDTFFPVAKGGTFCIPGPFGAGKTVLQQVTSRNADVDIVIIAACGERAGEVVETLKEFPELIDPKTGKSLMDRTCIICNTSSMPVAAREASVYTAITIGEYYRQMGLDILLLADSTSRWAQAMREMSGRLEEIPGEEAFPAYLESVIASFYERAGIVVLNNGDIGSVTVGGSVSPAGGNFEEPVTQATLKVVGAFHGLTRERSDARKFPAISPLESWSKYKGVIDSKKAEYARSFLVKGNEINQMMKVVGEEGISSEDFLIYLKSELLDSCYLQQNSFDSVDAAVSSERQNYMFDIVYNILKTNFEFSDKLQARDFMNELRQNLLDMNLSSFKDYKFNKLEQALSELVNLKKVI.

Residue 238–245 (GPFGAGKT) coordinates ATP.

The protein belongs to the ATPase alpha/beta chains family.

It catalyses the reaction ATP + H2O + 4 H(+)(in) = ADP + phosphate + 5 H(+)(out). Produces ATP from ADP in the presence of a proton gradient across the membrane. The V-type alpha chain is a catalytic subunit. This is V-type ATP synthase alpha chain from Borrelia garinii subsp. bavariensis (strain ATCC BAA-2496 / DSM 23469 / PBi) (Borreliella bavariensis).